The chain runs to 504 residues: ATP synthase subunit alpha 2 (504 aa).

169-176 (GDRQTGKT) is an ATP binding site.

It belongs to the ATPase alpha/beta chains family. F-type ATPases have 2 components, CF(1) - the catalytic core - and CF(0) - the membrane proton channel. CF(1) has five subunits: alpha(3), beta(3), gamma(1), delta(1), epsilon(1). CF(0) has three main subunits: a(1), b(2) and c(9-12). The alpha and beta chains form an alternating ring which encloses part of the gamma chain. CF(1) is attached to CF(0) by a central stalk formed by the gamma and epsilon chains, while a peripheral stalk is formed by the delta and b chains.

The protein resides in the cell membrane. The catalysed reaction is ATP + H2O + 4 H(+)(in) = ADP + phosphate + 5 H(+)(out). Its function is as follows. Produces ATP from ADP in the presence of a proton gradient across the membrane. The alpha chain is a regulatory subunit. The polypeptide is ATP synthase subunit alpha 2 (Listeria welshimeri serovar 6b (strain ATCC 35897 / DSM 20650 / CCUG 15529 / CIP 8149 / NCTC 11857 / SLCC 5334 / V8)).